A 229-amino-acid chain; its full sequence is MSTEQPAPRWAAFARDTNETKIQIALNLDGGAFPPETDARLNVSIADGHATQASKSQTISVNTGIGFLDHMLHALAKHAGWSLALACKGDLHIDDHHTAEDVCIALGYAFAKALGTPTGLARFGSAYCPLDEALSRAVVDLSNRPFAVVDLGLKREKIGDLSTEMIPHCIHSFAGAARITVHVDCLRGDNDHHRAESAFKALAVATRQATSRVAGREGEVPSTKGTLSV.

Belongs to the imidazoleglycerol-phosphate dehydratase family.

The catalysed reaction is D-erythro-1-(imidazol-4-yl)glycerol 3-phosphate = 3-(imidazol-4-yl)-2-oxopropyl phosphate + H2O. Its pathway is amino-acid biosynthesis; L-histidine biosynthesis; L-histidine from 5-phospho-alpha-D-ribose 1-diphosphate: step 6/9. This Neurospora crassa (strain ATCC 24698 / 74-OR23-1A / CBS 708.71 / DSM 1257 / FGSC 987) protein is Imidazoleglycerol-phosphate dehydratase.